The primary structure comprises 108 residues: Phosphoribosyl-AMP cyclohydrolase (108 aa).

Asp-78 provides a ligand contact to Mg(2+). Cys-79 serves as a coordination point for Zn(2+). Mg(2+) contacts are provided by Asp-80 and Asp-82. The Zn(2+) site is built by Cys-95 and Cys-102.

It belongs to the PRA-CH family. Homodimer. Requires Mg(2+) as cofactor. The cofactor is Zn(2+).

The protein resides in the cytoplasm. It catalyses the reaction 1-(5-phospho-beta-D-ribosyl)-5'-AMP + H2O = 1-(5-phospho-beta-D-ribosyl)-5-[(5-phospho-beta-D-ribosylamino)methylideneamino]imidazole-4-carboxamide. The protein operates within amino-acid biosynthesis; L-histidine biosynthesis; L-histidine from 5-phospho-alpha-D-ribose 1-diphosphate: step 3/9. Functionally, catalyzes the hydrolysis of the adenine ring of phosphoribosyl-AMP. The polypeptide is Phosphoribosyl-AMP cyclohydrolase (Nitrosopumilus maritimus (strain SCM1)).